The chain runs to 376 residues: 26S proteasome non-ATPase regulatory subunit 13 (376 aa).

The PCI domain maps to 171 to 338 (SYYKDALRFL…KRVHMTWVQP (168 aa)). Lys-298 is subject to N6-acetyllysine.

The protein belongs to the proteasome subunit S11 family. In terms of assembly, component of the 19S proteasome regulatory particle complex. The 26S proteasome consists of a 20S core particle (CP) and two 19S regulatory subunits (RP). The regulatory particle is made of a lid composed of 9 subunits including PSMD13, a base containing 6 ATPases and few additional components.

Functionally, component of the 26S proteasome, a multiprotein complex involved in the ATP-dependent degradation of ubiquitinated proteins. This complex plays a key role in the maintenance of protein homeostasis by removing misfolded or damaged proteins, which could impair cellular functions, and by removing proteins whose functions are no longer required. Therefore, the proteasome participates in numerous cellular processes, including cell cycle progression, apoptosis, or DNA damage repair. This chain is 26S proteasome non-ATPase regulatory subunit 13, found in Rattus norvegicus (Rat).